We begin with the raw amino-acid sequence, 434 residues long: Protein phosphatase 2C 56 (434 aa).

The region spanning 128 to 422 is the PPM-type phosphatase domain; that stretch reads LYGFTSICGR…DNISVVVVDL (295 aa). Residues D177, D261, S262, D347, and D413 each coordinate Mg(2+). The short motif at 423-427 is the Nuclear localization signal element; that stretch reads KPRRK.

The protein belongs to the PP2C family. As to quaternary structure, interacts with SPK1, ATHB-6, CIPK15/PKS3, GPX3, SRK2E/OST1, SRK2D, SRK2I, SCAR1, SCAR2, SCAR3 and SCARL. Binds to the PA released by the phospholipase D alpha 1 (PLDALPHA1) in response to ABA during the stomatal closure regulation. Interacts with ABA-bounded PYR1, PYL1, PYL2, PYL3, PYL4, PYL5, PYL6, PYL7, PYL8, PYL9, PYL10, and with free PYL2, PYL3, PYL4 and PYL13. Binds to RPL12B, CPK21 and CPK23. Binds to MAPKKK18. Interacts with KIN10. Interacts with phosphorylated PYL8/RCAR3. Requires Mg(2+) as cofactor. Mn(2+) serves as cofactor. Expressed in seeds and seedlings. In roots, confined to lateral root caps and columella cells.

Its subcellular location is the nucleus. It is found in the cytoplasm. The protein localises to the cell membrane. The catalysed reaction is O-phospho-L-seryl-[protein] + H2O = L-seryl-[protein] + phosphate. It catalyses the reaction O-phospho-L-threonyl-[protein] + H2O = L-threonyl-[protein] + phosphate. Phosphatase activity repressed by oxidized GPX3 and phosphatidic acid (PA). PA is produced by PLD alpha 1 in response to ABA. Repressed by PYR/PYL/RCAR ABA receptors in an ABA-dependent manner. Key component and repressor of the abscisic acid (ABA) signaling pathway that regulates numerous ABA responses, such as stomatal closure, osmotic water permeability of the plasma membrane (Pos), drought-induced resistance and rhizogenesis, response to glucose, high light stress, seed germination and inhibition of vegetative growth. During the stomatal closure regulation, modulates the inward calcium-channel permeability as well as the actin reorganization in guard cells in response to ABA. Involved in the resistance to the bacterial pathogen Pseudomonas syringae pv. tomato. Controls negatively fibrillin expression that is involved in mediating ABA-induced photoprotection. May be involved in ABA content regulation. Plays a role in the Pro accumulation in response to reduced water availability (low water potential). Required for the ABA negative regulation of the ethylene-induced hyponastic growth. Involved in acquired thermotolerance of root growth and seedling survival. Activates/represses SRK2E/OST1 in response to ABA-dependent stimuli, especially in stomata closure regulation involving SLAC1. Represses MAPKKK18 activity and promotes MAPKKK18 degradation by the proteasome pathway upon abscisic acid (ABA) treatment. Represses KIN10 activity by the specific dephosphorylation of its T-loop Thr-198, leading to a poststress inactivation of SnRK1 signaling. Restricts MAPKKK20 activity by dephosphorylation. The sequence is that of Protein phosphatase 2C 56 from Arabidopsis thaliana (Mouse-ear cress).